The following is a 167-amino-acid chain: MSEWMKKGPLEWQDYIYKEVRVTASEKNEYKGWVLTTDPVSANIVLVNFLEDGSMSVTGIMGHAVQTVETMNEGDHRVREKLMHLFTSGDCKAYSPEDLEERKNSLKKWLEKNHIPITEQGDAPRTLCVAGVLTIDPPYGPENCSSSNEIILSRVQDLIEGHLTASQ.

Positions 7–74 (KGPLEWQDYI…VQTVETMNEG (68 aa)) constitute a Sm domain. In terms of domain architecture, AD spans 69-167 (ETMNEGDHRV…LIEGHLTASQ (99 aa)). 2 positions are modified to phosphoserine: S95 and S166.

As to quaternary structure, part of the core SMN complex that contains SMN1, GEMIN2/SIP1, DDX20/GEMIN3, GEMIN4, GEMIN5, GEMIN6, GEMIN7, GEMIN8 and STRAP/UNRIP. Part of the SMN-Sm complex that contains SMN1, GEMIN2/SIP1, DDX20/GEMIN3, GEMIN4, GEMIN5, GEMIN6, GEMIN7, GEMIN8, STRAP/UNRIP and the Sm proteins SNRPB, SNRPD1, SNRPD2, SNRPD3, SNRPE, SNRPF and SNRPG. Interacts with GEMIN7; the interaction is direct. Interacts with GEMIN8; the interaction is direct. Interacts with SNRPB, SNRPD2, SNRPD3 and SNRPE; the interaction is direct.

The protein resides in the nucleus. It is found in the nucleoplasm. Its subcellular location is the gem. It localises to the cytoplasm. Its function is as follows. The SMN complex catalyzes the assembly of small nuclear ribonucleoproteins (snRNPs), the building blocks of the spliceosome, and thereby plays an important role in the splicing of cellular pre-mRNAs. Most spliceosomal snRNPs contain a common set of Sm proteins SNRPB, SNRPD1, SNRPD2, SNRPD3, SNRPE, SNRPF and SNRPG that assemble in a heptameric protein ring on the Sm site of the small nuclear RNA to form the core snRNP (Sm core). In the cytosol, the Sm proteins SNRPD1, SNRPD2, SNRPE, SNRPF and SNRPG are trapped in an inactive 6S pICln-Sm complex by the chaperone CLNS1A that controls the assembly of the core snRNP. To assemble core snRNPs, the SMN complex accepts the trapped 5Sm proteins from CLNS1A forming an intermediate. Binding of snRNA inside 5Sm triggers eviction of the SMN complex, thereby allowing binding of SNRPD3 and SNRPB to complete assembly of the core snRNP. The polypeptide is Gem-associated protein 6 (GEMIN6) (Homo sapiens (Human)).